The primary structure comprises 528 residues: UDP-glucuronosyltransferase 2A1 (528 aa).

A signal peptide spans M1–G21. Topologically, residues N22–G494 are extracellular. N-linked (GlcNAc...) asparagine glycosylation occurs at N49. K135 carries the post-translational modification N6-succinyllysine. A glycan (N-linked (GlcNAc...) asparagine) is linked at N314. A helical transmembrane segment spans residues F495–F515. The Cytoplasmic portion of the chain corresponds to Q516 to D528.

Belongs to the UDP-glycosyltransferase family.

It localises to the membrane. The enzyme catalyses glucuronate acceptor + UDP-alpha-D-glucuronate = acceptor beta-D-glucuronoside + UDP + H(+). It carries out the reaction 16beta,17beta-estriol + UDP-alpha-D-glucuronate = 16beta,17beta-estriol 16-O-(beta-D-glucuronate) + UDP + H(+). The catalysed reaction is 16alpha,17alpha-estriol + UDP-alpha-D-glucuronate = 16alpha,17alpha-estriol 16-O-(beta-D-glucuronate) + UDP + H(+). It catalyses the reaction 17alpha-estradiol + UDP-alpha-D-glucuronate = 17alpha-estradiol 17-O-(beta-D-glucuronate) + UDP + H(+). The enzyme catalyses 17alpha-estradiol + UDP-alpha-D-glucuronate = 17alpha-estradiol 3-O-(beta-D-glucuronate) + UDP + H(+). It carries out the reaction 17beta-estradiol + UDP-alpha-D-glucuronate = 17beta-estradiol 3-O-(beta-D-glucuronate) + UDP + H(+). The catalysed reaction is 17beta-estradiol + UDP-alpha-D-glucuronate = 17beta-estradiol 17-O-(beta-D-glucuronate) + UDP + H(+). It catalyses the reaction testosterone + UDP-alpha-D-glucuronate = testosterone 17-O-(beta-D-glucuronate) + UDP + H(+). The enzyme catalyses epitestosterone + UDP-alpha-D-glucuronate = epitestosterone 17-O-(beta-D-glucuronate) + UDP + H(+). It carries out the reaction lithocholate + UDP-alpha-D-glucuronate = lithocholoyl-3-O-(beta-D-glucuronate) + UDP + H(+). The catalysed reaction is lithocholate + UDP-alpha-D-glucuronate = lithocholoyl-24-O-(beta-D-glucuronate) + UDP. It catalyses the reaction deoxycholate + UDP-alpha-D-glucuronate = deoxycholoyl-24-O-(beta-D-glucuronate) + UDP. The enzyme catalyses hyodeoxycholate + UDP-alpha-D-glucuronate = hyodeoxycholate 6-O-(beta-D-glucuronate) + UDP + H(+). It carries out the reaction hyocholate + UDP-alpha-D-glucuronate = hyocholoyl-24-O-(beta-D-glucuronate) + UDP. In terms of biological role, UDP-glucuronosyltransferase (UGT) that catalyzes phase II biotransformation reactions in which lipophilic substrates are conjugated with glucuronic acid to increase the metabolite's water solubility, thereby facilitating excretion into either the urine or bile. Essential for the elimination and detoxification of drugs, xenobiotics and endogenous compounds. Catalyzes the glucuronidation of endogenous steroid hormones such as androgens (testosterones) and estrogens (estradiol and estriol). Contributes to bile acid (BA) detoxification by catalyzing the glucuronidation of BA substrates, which are natural detergents for dietary lipids absorption. Shows a high affinity to aliphatic odorants such as citronellol as well as olfactory tissue specificity, and therefore may be involved in olfaction. The chain is UDP-glucuronosyltransferase 2A1 from Mus musculus (Mouse).